A 333-amino-acid polypeptide reads, in one-letter code: Probable G-protein coupled receptor 33 (333 aa).

At 1–30 (MDLINSTDYLINASTLVRNSTQFLAPASKM) the chain is on the extracellular side. 3 N-linked (GlcNAc...) asparagine glycosylation sites follow: Asn5, Asn12, and Asn19. The helical transmembrane segment at 31–53 (IIALSLYISSIIGTITNGLYLWV) threads the bilayer. Residues 54–64 (LRFKMKQTVNT) lie on the Cytoplasmic side of the membrane. A helical membrane pass occupies residues 65–86 (LLFFHLILSYFISTMILPFMAT). The Extracellular segment spans residues 87–103 (SQLQDNHWNFGTALCKV). Cys101 and Cys179 are oxidised to a cystine. A helical transmembrane segment spans residues 104–124 (FNGTLSLGMFTSVFFLSAIGL). Residues 125-143 (DRYLLTLHPVWSQQHRTPR) are Cytoplasmic-facing. The chain crosses the membrane as a helical span at residues 144–165 (WASSIVLGVWISAAALSIPYLI). At 166 to 209 (FRETHHDRKGKVTCQNNYAVSTNWESKEMQASRQWIHVACFISR) the chain is on the extracellular side. Residues 210-230 (FLLGFLLPFFIIIFCYERVAS) traverse the membrane as a helical segment. The Cytoplasmic segment spans residues 231 to 246 (KVKERSLFKSSKPFKV). A helical membrane pass occupies residues 247–268 (MMTAIISFFVCWMPYHIHQGLL). At 269 to 283 (LTTNQSLLLELTLIL) the chain is on the extracellular side. N-linked (GlcNAc...) asparagine glycosylation occurs at Asn272. Residues 284–303 (TVLTTSFNTIFSPTLYLFVG) form a helical membrane-spanning segment. Topologically, residues 304 to 333 (ENFKKVFKKSILALFESTFSEDSSVERTQT) are cytoplasmic.

It belongs to the G-protein coupled receptor 1 family. In terms of tissue distribution, expressed in spleen, lung, heart, liver, kidney, pancreas, thymus, gonads and leukocytes.

The protein localises to the cell membrane. Its function is as follows. Orphan receptor; could be a chemoattractant receptor. The sequence is that of Probable G-protein coupled receptor 33 (GPR33) from Homo sapiens (Human).